The chain runs to 525 residues: Ubiquitin carboxyl-terminal hydrolase 22 (525 aa).

The UBP-type zinc-finger motif lies at Pro-21 to Met-138. Residues Cys-23, His-25, Cys-63, Cys-66, Cys-76, Cys-79, Cys-84, His-89, His-93, His-99, Cys-112, and Cys-115 each coordinate Zn(2+). An N6-acetyllysine modification is found at Lys-129. Thr-147 carries the phosphothreonine; by CDK1 modification. The USP domain occupies Arg-176–Gln-520. The Nucleophile role is filled by Cys-185. Ser-237 carries the post-translational modification Phosphoserine; by CDK1. His-479 (proton acceptor) is an active-site residue.

Belongs to the peptidase C19 family. UBP8 subfamily. Component of some SAGA transcription coactivator-HAT complexes, at least composed of ATXN7, ATXN7L3, ENY2, GCN5L2, SUPT3H, TAF10, TRRAP and USP22. Within the SAGA complex, ATXN7L3, ENY2 and USP22 form a subcomplex required for histone deubiquitination. Interacts directly with ATXN7L3; leading to its recruitment to the SAGA complex. Interacts with ATXN7L3 and weakly with ATXN7L3B. Interacts with MED1. Phosphorylated in G2/M phase, but not in G1 phase by CDK1. In terms of processing, ubiquitinated and subsequently degraded in a CDC20-dependent manner. Moderately expressed in various tissues including heart and skeletal muscle, and weakly expressed in lung and liver.

The protein resides in the nucleus. Its subcellular location is the cytoplasm. The enzyme catalyses Thiol-dependent hydrolysis of ester, thioester, amide, peptide and isopeptide bonds formed by the C-terminal Gly of ubiquitin (a 76-residue protein attached to proteins as an intracellular targeting signal).. In terms of biological role, deubiquitinase that plays a role in several cellular processes including transcriptional regulation, cell cycle progression or innate immunity. As part of the transcription regulatory histone acetylation (HAT) complex SAGA, catalyzes the deubiquitination of both histones H2A and H2B, thereby acting as a transcriptional coactivator. Recruited to specific gene promoters by activators such as MYC, where it is required for transcription. Facilitates cell-cycle progression by stabilizing CCNB1 and antagonizing its proteasome-mediated degradation in a cell cycle-specific manner. Modulates cell cycle progression and apoptosis also by antagonizing TP53 transcriptional activation through deacetylase SIRT1 stabilization. Plays multiple roles in immunity and inflammation. Participates in antiviral response by deubiquitinating the importin KPNA2, leading to IRF3 nuclear translocation and subsequent type I interferon production. Acts as a central regulator of type III IFN signaling by negatively regulating STING1 activation and ubiquitination. Inhibits NLRP3 inflammasome activation by promoting NLRP3 degradation through ATG5-dependent autophagy. Deubiquitinates CD274 to induce its stabilization and thereby participates in maintenance of immune tolerance to self. Controls necroptotic cell death by regulating RIPK3 phosphorylation and ubiquitination. During bacterial infection, promotes pro-inflammatory response by targeting TRAF6 and removing its 'Lys-48'-linked polyubiquitination. This is Ubiquitin carboxyl-terminal hydrolase 22 (USP22) from Homo sapiens (Human).